Consider the following 699-residue polypeptide: Protein phosphatase 1 regulatory subunit 37 (699 aa).

Residues 1–12 (MEIPPQEAPPGP) show a composition bias toward pro residues. The tract at residues 1-42 (MEIPPQEAPPGPGADGEAEEAPVEAPSPGPASPPADGRLKAA) is disordered. 2 positions are modified to phosphoserine: Ser50 and Ser56. 5 LRR repeats span residues 220–240 (SLAV…MLLA), 248–269 (TLRE…AQLG), 277–297 (SLQI…AYIC), 306–326 (GLAT…AFLG), and 334–354 (SLET…RNLK). Positions 467–667 (RLQLSASMPE…PPGPEAKVGS (201 aa)) are disordered. The span at 510-525 (SDSDSDSEGEDRDEAD) shows a compositional bias: acidic residues. Residue Ser566 is modified to Phosphoserine. Pro residues-rich tracts occupy residues 588-613 (PPVP…PFPT) and 622-642 (DPGP…PPLP).

Belongs to the PPP1R37 family. Interacts with PPP1CA.

Its function is as follows. Inhibits phosphatase activity of protein phosphatase 1 (PP1) complexes. In Bos taurus (Bovine), this protein is Protein phosphatase 1 regulatory subunit 37 (PPP1R37).